A 506-amino-acid polypeptide reads, in one-letter code: Probable alpha-L-arabinofuranosidase B (506 aa).

The N-terminal stretch at 1–26 is a signal peptide; it reads MLSQPSRERAFVLALGLVVSSSLAAA. Positions 27-343 are catalytic; the sequence is APCDIYSSGG…ADIVAANYAV (317 aa). 3 cysteine pairs are disulfide-bonded: Cys-29–Cys-39, Cys-89–Cys-94, and Cys-184–Cys-185. Asp-227 lines the substrate pocket. Residue Glu-229 is the Nucleophile of the active site. Asn-230 serves as a coordination point for substrate. An N-linked (GlcNAc...) asparagine glycan is attached at Asn-285. A substrate-binding site is contributed by Gly-304. Asp-305 functions as the Proton donor in the catalytic mechanism. The tract at residues 344 to 506 is ABD; it reads TSLTSGPALT…VSWVISSGFA (163 aa). Cys-409 and Cys-447 form a disulfide bridge. His-424, Asn-426, Phe-427, Asp-443, His-471, Leu-476, and Asp-496 together coordinate substrate.

This sequence belongs to the glycosyl hydrolase 54 family.

The protein resides in the secreted. The enzyme catalyses Hydrolysis of terminal non-reducing alpha-L-arabinofuranoside residues in alpha-L-arabinosides.. It participates in glycan metabolism; L-arabinan degradation. Functionally, alpha-L-arabinofuranosidase involved in the degradation of arabinoxylan, a major component of plant hemicellulose. Able to hydrolyze 1,5-, 1,3- and 1,2-alpha-linkages not only in L-arabinofuranosyl oligosaccharides, but also in polysaccharides containing terminal non-reducing L-arabinofuranoses in side chains, like L-arabinan, arabinogalactan and arabinoxylan. The chain is Probable alpha-L-arabinofuranosidase B (abfB) from Aspergillus clavatus (strain ATCC 1007 / CBS 513.65 / DSM 816 / NCTC 3887 / NRRL 1 / QM 1276 / 107).